A 272-amino-acid chain; its full sequence is Ribonuclease HII (272 aa).

Residues K87 to L272 form the RNase H type-2 domain. A divalent metal cation-binding residues include D93, E94, and D188.

Belongs to the RNase HII family. Mn(2+) serves as cofactor. Mg(2+) is required as a cofactor.

It is found in the cytoplasm. The catalysed reaction is Endonucleolytic cleavage to 5'-phosphomonoester.. Functionally, endonuclease that specifically degrades the RNA of RNA-DNA hybrids. This is Ribonuclease HII from Clostridium perfringens (strain ATCC 13124 / DSM 756 / JCM 1290 / NCIMB 6125 / NCTC 8237 / Type A).